The chain runs to 329 residues: 4-hydroxythreonine-4-phosphate dehydrogenase (329 aa).

The substrate site is built by H136 and T137. A divalent metal cation contacts are provided by H166, H211, and H266. Substrate contacts are provided by K274, N283, and R292.

This sequence belongs to the PdxA family. As to quaternary structure, homodimer. Zn(2+) is required as a cofactor. It depends on Mg(2+) as a cofactor. Co(2+) serves as cofactor.

It localises to the cytoplasm. It catalyses the reaction 4-(phosphooxy)-L-threonine + NAD(+) = 3-amino-2-oxopropyl phosphate + CO2 + NADH. The protein operates within cofactor biosynthesis; pyridoxine 5'-phosphate biosynthesis; pyridoxine 5'-phosphate from D-erythrose 4-phosphate: step 4/5. In terms of biological role, catalyzes the NAD(P)-dependent oxidation of 4-(phosphooxy)-L-threonine (HTP) into 2-amino-3-oxo-4-(phosphooxy)butyric acid which spontaneously decarboxylates to form 3-amino-2-oxopropyl phosphate (AHAP). This chain is 4-hydroxythreonine-4-phosphate dehydrogenase, found in Shigella flexneri serotype 5b (strain 8401).